A 476-amino-acid polypeptide reads, in one-letter code: Serine protease HTRA4 (476 aa).

Residues 1–31 (MIRPQLRTAGLGRCLLPGLLLLLVPVLWAGA) form the signal peptide. Residues 36 to 109 (TQPSCPAVCQ…PGFPSTCGCP (74 aa)) enclose the IGFBP N-terminal domain. 8 disulfides stabilise this stretch: Cys40-Cys66, Cys44-Cys68, Cys49-Cys69, Cys55-Cys72, Cys80-Cys94, Cys88-Cys106, Cys108-Cys127, and Cys116-Cys152. A Kazal-like domain is found at 88–154 (CAPGLQCLQP…VPVQWGNCGD (67 aa)). Residues 202-362 (GSGFIVSEDG…IPSDRVRQFL (161 aa)) are serine protease. Residues His218, Asp248, and Ser326 each act as charge relay system in the active site. In terms of domain architecture, PDZ spans 383-474 (LQMLSLTVPL…NLLLTVIPET (92 aa)).

The protein belongs to the peptidase S1C family.

It is found in the secreted. Functionally, serine protease. This chain is Serine protease HTRA4 (HTRA4), found in Homo sapiens (Human).